The following is a 421-amino-acid chain: Testin (421 aa).

The 108-residue stretch at 92 to 199 folds into the PET domain; that stretch reads MILTNPVAAK…GDVKLPRDMN (108 aa). Disordered stretches follow at residues 133 to 164 and 193 to 213; these read EKQPVAGSEGAQYRKKQLAKQLPAHDQDPSKC and KLPRDMNTQGPNKMYIPGGDR. Basic and acidic residues predominate over residues 155–164; it reads PAHDQDPSKC. LIM zinc-binding domains lie at 234–297, 299–359, and 362–421; these read YSCY…CDSE, PRCA…NHAV, and QGCH…KMMS.

It belongs to the prickle / espinas / testin family. Interacts via LIM domain 1 with ZYX. Interacts (via LIM domain 3) with ENAH and VASP. Interacts with ALKBH4, talin, actin, alpha-actinin, GRIP1 and PXN. Interacts (via LIM domain 2) with ACTL7A (via N-terminus). Heterodimer with ACTL7A; the heterodimer interacts with ENAH to form a heterotrimer.

Its subcellular location is the cytoplasm. It localises to the cell junction. The protein resides in the focal adhesion. Its function is as follows. Scaffold protein that may play a role in cell adhesion, cell spreading and in the reorganization of the actin cytoskeleton. Plays a role in the regulation of cell proliferation. May act as a tumor suppressor. This chain is Testin (TES), found in Ovis aries (Sheep).